The chain runs to 275 residues: Large ribosomal subunit protein uL2 (275 aa).

Disordered stretches follow at residues 222–243 and 256–275; these read GSVMNPTDHPHGGGEGRAPIGR and GGKTRRKKPSDNMIVRKRKP.

The protein belongs to the universal ribosomal protein uL2 family. In terms of assembly, part of the 50S ribosomal subunit. Forms a bridge to the 30S subunit in the 70S ribosome.

In terms of biological role, one of the primary rRNA binding proteins. Required for association of the 30S and 50S subunits to form the 70S ribosome, for tRNA binding and peptide bond formation. It has been suggested to have peptidyltransferase activity; this is somewhat controversial. Makes several contacts with the 16S rRNA in the 70S ribosome. The chain is Large ribosomal subunit protein uL2 from Syntrophomonas wolfei subsp. wolfei (strain DSM 2245B / Goettingen).